The primary structure comprises 432 residues: E3 ubiquitin-protein ligase RNF135 (432 aa).

An RING-type zinc finger spans residues 21–63 (CIICQGLLDWPATLPCGHSFCRHCLEALWGARDARRWACPTCR). A disordered region spans residues 95 to 121 (GSDPAHCPCPGSSSLSSAAARPRRRPE). Residues 102–114 (PCPGSSSLSSAAA) are compositionally biased toward low complexity. Coiled coils occupy residues 121–156 (ELQRVAVEKSITEVAQELTELVEHLVDIVRSLQNQR) and 191–216 (DTAAGKIRDILHDLEEIQEKLQESVT). The 192-residue stretch at 241-432 (PDQSHPALRR…NYLIIKQVKV (192 aa)) folds into the B30.2/SPRY domain.

In terms of assembly, homodimer. Interacts (homodimer) with RIGI (double-stranded RNA-bound oligomeric form); involved in both RIGI ubiquitination, oligomerization into filaments associated with viral RNAs and the bridging of these filaments. Interacts with UBE2D3 and UBE2N; E2 ubiquitin ligases involved in RNF135-mediated ubiquitination of RIGI and activation of the RIG-I signaling pathway. Interacts with PCBP2. (Microbial infection) Cleaved and inactivated by hepatitis C virus NS3/NS4A. As to expression, expressed in skeletal muscle, spleen, kidney, placenta, prostate, stomach, thyroid and tongue. Also weakly expressed in heart, thymus, liver and lung.

It localises to the cytoplasm. Its subcellular location is the stress granule. It carries out the reaction S-ubiquitinyl-[E2 ubiquitin-conjugating enzyme]-L-cysteine + [acceptor protein]-L-lysine = [E2 ubiquitin-conjugating enzyme]-L-cysteine + N(6)-ubiquitinyl-[acceptor protein]-L-lysine.. Its pathway is protein modification; protein ubiquitination. E2-dependent E3 ubiquitin-protein ligase that functions as a RIGI coreceptor in the sensing of viral RNAs in cell cytoplasm and the activation of the antiviral innate immune response. Together with the UBE2D3, UBE2N and UB2V1 E2 ligases, catalyzes the 'Lys-63'-linked polyubiquitination of RIGI oligomerized on viral RNAs, an essential step in the activation of the RIG-I signaling pathway. Through a ubiquitin-independent parallel mechanism, which consists in bridging RIGI filaments forming on longer viral RNAs, further activates the RIG-I signaling pathway. This second mechanism that synergizes with the ubiquitin-dependent one would thereby allow an RNA length-dependent regulation of the RIG-I signaling pathway. Associated with the E2 ligase UBE2N, also constitutively synthesizes unanchored 'Lys-63'-linked polyubiquitin chains that may also activate the RIG-I signaling pathway. This Homo sapiens (Human) protein is E3 ubiquitin-protein ligase RNF135.